The chain runs to 402 residues: Phosphoribulokinase, chloroplastic (402 aa).

Residues 1–51 (MAVCTVYTIPTTTHLGSSFNQNNKQVFFNYKRSSSSNNTLFTTRPSYVITC) constitute a chloroplast transit peptide. A disulfide bridge connects residues Cys-67 and Cys-106.

The protein belongs to the phosphoribulokinase family.

The protein localises to the plastid. It localises to the chloroplast. It carries out the reaction D-ribulose 5-phosphate + ATP = D-ribulose 1,5-bisphosphate + ADP + H(+). It functions in the pathway carbohydrate biosynthesis; Calvin cycle. Its activity is regulated as follows. Light regulated via thioredoxin by reversible oxidation/reduction of sulfhydryl/disulfide groups. In Spinacia oleracea (Spinach), this protein is Phosphoribulokinase, chloroplastic.